Here is a 694-residue protein sequence, read N- to C-terminus: NADPH--cytochrome P450 reductase (694 aa).

Over 1-8 the chain is Lumenal; sequence MAQLDTLD. The helical transmembrane segment at 9–31 threads the bilayer; sequence LVVLAVLLVGSVAYFTKGTYWAV. The Cytoplasmic segment spans residues 32-694; that stretch reads AKDPYASTGP…RGRYQEDVWS (663 aa). Positions 66-220 constitute a Flavodoxin-like domain; that stretch reads CVIFYGSQTG…DFLAWKEPMW (155 aa). Residues 72 to 77, 123 to 126, 168 to 177, and aspartate 203 each bind FMN; these read SQTGTA, ATYG, and LGNNTYEHYN. One can recognise an FAD-binding FR-type domain in the interval 276–537; that stretch reads HNPFIAPIAE…HVRHSNFKLP (262 aa). Position 295 (arginine 295) interacts with NADP(+). Residues 450-453, 468-470, and 485-488 each bind FAD; these read RYYS, TAV, and GVTT. NADP(+) contacts are provided by residues threonine 551, 613–614, 619–623, and glutamate 655; these read SR and KVYVQ. FAD is bound at residue tryptophan 693.

It belongs to the NADPH--cytochrome P450 reductase family. The protein in the N-terminal section; belongs to the flavodoxin family. This sequence in the C-terminal section; belongs to the flavoprotein pyridine nucleotide cytochrome reductase family. The cofactor is FAD. Requires FMN as cofactor.

It localises to the endoplasmic reticulum membrane. It is found in the mitochondrion outer membrane. The protein resides in the cell membrane. It carries out the reaction 2 oxidized [cytochrome P450] + NADPH = 2 reduced [cytochrome P450] + NADP(+) + H(+). Its function is as follows. This enzyme is required for electron transfer from NADP to cytochrome P450 in microsomes. It can also provide electron transfer to heme oxygenase and cytochrome B5. Involved in ergosterol biosynthesis. In Aspergillus niger, this protein is NADPH--cytochrome P450 reductase.